The chain runs to 529 residues: UDP-glycosyltransferase (529 aa).

2 N-linked (GlcNAc...) asparagine glycosylation sites follow: Asn-70 and Asn-420. The helical transmembrane segment at 504 to 524 (LDLYLVYIALFAVPVGAVRWI) threads the bilayer.

The protein belongs to the glycosyltransferase 28 family.

It is found in the membrane. It catalyses the reaction stromemycin aglycone + UDP-alpha-D-glucose = stromemycin + UDP + H(+). It functions in the pathway mycotoxin biosynthesis. Functionally, UDP-glycosyltransferase; part of the gene cluster that mediates the biosynthesis of stromemycin, a depside C-glucoside with two unsaturated C9 side chains belonging to aromatic polyketide glycosides. Acts as the tailoring enzyme responsible for 3-C-glucosylation of bininalkenylresorcylic acid to yield stromemycin. The protein is UDP-glycosyltransferase of Talaromyces amestolkiae.